Consider the following 297-residue polypeptide: Large ribosomal subunit protein uL18 (297 aa).

The protein belongs to the universal ribosomal protein uL18 family. In terms of assembly, component of the large ribosomal subunit (LSU).

The protein resides in the cytoplasm. The protein localises to the nucleus. Component of the ribosome, a large ribonucleoprotein complex responsible for the synthesis of proteins in the cell. The small ribosomal subunit (SSU) binds messenger RNAs (mRNAs) and translates the encoded message by selecting cognate aminoacyl-transfer RNA (tRNA) molecules. The large subunit (LSU) contains the ribosomal catalytic site termed the peptidyl transferase center (PTC), which catalyzes the formation of peptide bonds, thereby polymerizing the amino acids delivered by tRNAs into a polypeptide chain. The nascent polypeptides leave the ribosome through a tunnel in the LSU and interact with protein factors that function in enzymatic processing, targeting, and the membrane insertion of nascent chains at the exit of the ribosomal tunnel. The sequence is that of Large ribosomal subunit protein uL18 (RpL5) from Aedes aegypti (Yellowfever mosquito).